The primary structure comprises 823 residues: Bifunctional enzyme flvA (823 aa).

The segment at 56–535 is pyridoxal 5'-phosphate-dependent lyase; it reads TAKFEMALMP…QRLYDAKFYI (480 aa). K331 is modified (N6-(pyridoxal phosphate)lysine). Residues 573–823 form an alpha-ketoglutarate-dependent oxygenase region; sequence DFDALQQVSH…TLPMNVPLWL (251 aa). Fe cation-binding residues include H703 and D705.

In the N-terminal section; belongs to the trans-sulfuration enzymes family. The protein in the C-terminal section; belongs to the iron/ascorbate-dependent oxidoreductase family. It depends on pyridoxal 5'-phosphate as a cofactor. Requires Fe(2+) as cofactor.

The catalysed reaction is O-acetyl-L-homoserine + 3-methyl-2-oxobutanoate = (6S)-6-amino-3,3-dimethyl-2-oxoheptanedioate + acetate + H(+). It carries out the reaction (6S)-3,3-dimethylpiperidine-2,6-dicarboxylate + 2-oxoglutarate + AH2 + O2 + H(+) = (2S)-5,5-dimethylpiperidine-2-carboxylate + succinate + A + 2 CO2 + H2O. The protein operates within secondary metabolite biosynthesis; terpenoid biosynthesis. Bifunctional enzyme; part of the gene cluster that mediates the biosynthesis of flavunoidine, an alkaloidal terpenoid with a tetracyclic cage-like core connected to dimethylcadaverine via a C-N bond and acylated with 5,5-dimethyl-L-pipecolate. The tetracyclic core is synthesized by the terpene cyclase flvE and the cytochrome P450 monooxygenase flvD. The terpene cyclase flvE catalyzes the cyclization of farnesyl pyrophosphate (FPP) to form (1R,4R,5S)-(+)-acoradiene and the cytochrome P450 monooxygenase flvD is then responsible for oxidative conversion of (1R,4R,5S)-(+)-acoradiene into the tetracyclic cage present in the final product flavunoidine. In parallel, the N-methyltransferase flvH dimethylates L-lysine to give N,N-dimethyl-L-Lysin which is decarboxylated by flvG to afford dimethylcadaverine. The terpene cyclase-like protein flvF is the enzyme that attaches the dimethylcadaverine precusor at the C-7 of the tetracyclic cage to yield pre-flavunoidine. The cytochrome monooxygenase flvC hydroxylates the C-10 position of pre-flavunoidine whereas the NRPS flvI acylates the terpenoid core at the hydroxylated C-10 with dimethylpipecolate to yield final flavunoidine. The bifunctional enzyme flvA and the dehydrogenase flvB are responsible for the synthesis of the dimethylpipecolate precursor. The PLP-dependent lyase domain of flvA might use L-O-acetyl-homoserine and alpha-keto-isovalerate to form an intermediary ketone that can cyclize intramolecularly to yield an imine. The imine can be reduced by flvB to yield the 6-carboxylated pipecolate. The C-terminal alpha-KG-dependent oxygenase domain of flvA is then proposed to catalyze the decarboxylation to yield dimethylpipecolate. The sequence is that of Bifunctional enzyme flvA from Aspergillus flavus (strain ATCC 200026 / FGSC A1120 / IAM 13836 / NRRL 3357 / JCM 12722 / SRRC 167).